The primary structure comprises 461 residues: UDP-glycosyltransferase 82A1 (461 aa).

UDP-alpha-D-glucose contacts are provided by residues Ser-292, 349 to 351 (APQ), 366 to 374 (HCGWNSTME), and 388 to 391 (AGDQ).

The protein belongs to the UDP-glycosyltransferase family.

This chain is UDP-glycosyltransferase 82A1 (UGT82A1), found in Arabidopsis thaliana (Mouse-ear cress).